The following is an 865-amino-acid chain: Alanine--tRNA ligase (865 aa).

Residues histidine 552, histidine 556, cysteine 654, and histidine 658 each coordinate Zn(2+).

This sequence belongs to the class-II aminoacyl-tRNA synthetase family. Zn(2+) serves as cofactor.

Its subcellular location is the cytoplasm. It carries out the reaction tRNA(Ala) + L-alanine + ATP = L-alanyl-tRNA(Ala) + AMP + diphosphate. In terms of biological role, catalyzes the attachment of alanine to tRNA(Ala) in a two-step reaction: alanine is first activated by ATP to form Ala-AMP and then transferred to the acceptor end of tRNA(Ala). Also edits incorrectly charged Ser-tRNA(Ala) and Gly-tRNA(Ala) via its editing domain. The sequence is that of Alanine--tRNA ligase from Coxiella burnetii (strain Dugway 5J108-111).